A 172-amino-acid polypeptide reads, in one-letter code: Peptidyl-prolyl cis-trans isomerase CYP18-4 (172 aa).

One can recognise a PPIase cyclophilin-type domain in the interval 7-170 (FFDMSLSGTP…KVVTITDCGQ (164 aa)).

The protein belongs to the cyclophilin-type PPIase family. Interacts with A.tumefaciens VirD2. As to expression, ubiquitous, with higher levels in roots and flowers. Confined to vascular tissues. Also detected in stigmas, base of siliques and anthers.

The protein resides in the cytoplasm. It catalyses the reaction [protein]-peptidylproline (omega=180) = [protein]-peptidylproline (omega=0). With respect to regulation, binds cyclosporin A (CsA). CsA mediates some of its effects via an inhibitory action on PPIase. Its function is as follows. PPIases accelerate the folding of proteins. It catalyzes the cis-trans isomerization of proline imidic peptide bonds in oligopeptides. This chain is Peptidyl-prolyl cis-trans isomerase CYP18-4 (CYP18-4), found in Arabidopsis thaliana (Mouse-ear cress).